The sequence spans 129 residues: M-zodatoxin-Lt8b (129 aa).

Positions Met-1–Ser-20 are cleaved as a signal peptide. Residues Lys-21–Arg-60 constitute a propeptide that is removed on maturation. The Processing quadruplet motif motif lies at Glu-57–Arg-60.

Cleavage of the propeptide depends on the processing quadruplet motif (XXXR, with at least one of X being E). As to expression, expressed by the venom gland.

It is found in the secreted. Functionally, insecticidal, cytolytic and antimicrobial peptide. Forms voltage-dependent, ion-permeable channels in membranes. At high concentration causes cell membrane lysis. This is M-zodatoxin-Lt8b (cit 1-2) from Lachesana tarabaevi (Spider).